The following is a 163-amino-acid chain: MINNVVLVGRMTKDAELRYTPSQVAVATFTLAVNRTFKSQNGEREADFINCVIWRQPAENLANWAKKGALIGVTGRIQTRNYENQQGQRVYVTEVVADNFQMLESRATREGGSTGSFNGGFNNNTSSSNSYSAPAQQTPNFGRDDSPFGNSNPMDISDDDLPF.

An SSB domain is found at 1-104 (MINNVVLVGR…VVADNFQMLE (104 aa)). The tract at residues 109-163 (REGGSTGSFNGGFNNNTSSSNSYSAPAQQTPNFGRDDSPFGNSNPMDISDDDLPF) is disordered. Positions 119–130 (GGFNNNTSSSNS) are enriched in low complexity. The span at 131 to 140 (YSAPAQQTPN) shows a compositional bias: polar residues. The Important for interaction with partner proteins signature appears at 158 to 163 (DDDLPF).

Homotetramer.

Its function is as follows. Plays an important role in DNA replication, recombination and repair. Binds to ssDNA and to an array of partner proteins to recruit them to their sites of action during DNA metabolism. The chain is Single-stranded DNA-binding protein 2 (ssb2) from Streptococcus pyogenes serotype M6 (strain ATCC BAA-946 / MGAS10394).